Reading from the N-terminus, the 81-residue chain is NADH-ubiquinone oxidoreductase chain 6 (81 aa).

The next 3 membrane-spanning stretches (helical) occupy residues 1–21 (MTYF…GVAS), 27–47 (YGVV…LSLG), and 48–68 (VSFV…VVFV).

This sequence belongs to the complex I subunit 6 family.

The protein resides in the mitochondrion membrane. It carries out the reaction a ubiquinone + NADH + 5 H(+)(in) = a ubiquinol + NAD(+) + 4 H(+)(out). In terms of biological role, core subunit of the mitochondrial membrane respiratory chain NADH dehydrogenase (Complex I) that is believed to belong to the minimal assembly required for catalysis. Complex I functions in the transfer of electrons from NADH to the respiratory chain. The immediate electron acceptor for the enzyme is believed to be ubiquinone. This is NADH-ubiquinone oxidoreductase chain 6 (MT-ND6) from Anas platyrhynchos (Mallard).